The following is a 247-amino-acid chain: Probable transcriptional regulatory protein GTNG_2524 (247 aa).

Basic residues predominate over residues 1-14; the sequence is MAGHSKWKNIQRRK. The disordered stretch occupies residues 1 to 21; that stretch reads MAGHSKWKNIQRRKNAQDAKR.

Belongs to the TACO1 family.

It localises to the cytoplasm. This is Probable transcriptional regulatory protein GTNG_2524 from Geobacillus thermodenitrificans (strain NG80-2).